We begin with the raw amino-acid sequence, 168 residues long: Mitochondrial import inner membrane translocase subunit TIM14 (168 aa).

The segment covering 1-12 (MSSQSNTGNSIE) has biased composition (polar residues). A disordered region spans residues 1–29 (MSSQSNTGNSIEAPQLPIPGQTNGSANVT). The Mitochondrial intermembrane portion of the chain corresponds to 1–65 (MSSQSNTGNS…QALNYMGEHP (65 aa)). Residues 66-83 (VITGFGAFLTLYFTAGAY) traverse the membrane as a helical segment. Residues 84 to 168 (KSISKGLNGG…DFLEKRGISK (85 aa)) lie on the Mitochondrial matrix side of the membrane. Positions 112 to 168 (EALQILNLTENTLTKKKLKEVHRKIMLANHPDKGGSPFLATKINEAKDFLEKRGISK) constitute a J domain.

It belongs to the TIM14 family. In terms of assembly, homodimer and heterodimer with PAM16/TIM16. Homodimerization may not be relevant in vivo, while heterodimerization is essential for activity regulation of mtHSP70. Component of the PAM complex, at least composed of mtHsp70, MGE1, TIM44, PAM16, PAM17 and PAM18/TIM14. Interacts directly with mtHsp70. Interacts directly with TIM17 subunit of the TIM23 complex.

Its subcellular location is the mitochondrion inner membrane. Functionally, essential component of the PAM complex, a complex required for the translocation of transit peptide-containing proteins from the inner membrane into the mitochondrial matrix in an ATP-dependent manner. In the complex, it is required to stimulate activity of mtHSP70 (SSC1). The sequence is that of Mitochondrial import inner membrane translocase subunit TIM14 (PAM18) from Saccharomyces cerevisiae (strain ATCC 204508 / S288c) (Baker's yeast).